A 238-amino-acid chain; its full sequence is Ribonuclease PH (238 aa).

Phosphate-binding positions include Arg-86 and 124–126 (GTR).

The protein belongs to the RNase PH family. Homohexameric ring arranged as a trimer of dimers.

It carries out the reaction tRNA(n+1) + phosphate = tRNA(n) + a ribonucleoside 5'-diphosphate. Phosphorolytic 3'-5' exoribonuclease that plays an important role in tRNA 3'-end maturation. Removes nucleotide residues following the 3'-CCA terminus of tRNAs; can also add nucleotides to the ends of RNA molecules by using nucleoside diphosphates as substrates, but this may not be physiologically important. Probably plays a role in initiation of 16S rRNA degradation (leading to ribosome degradation) during starvation. This Cupriavidus metallidurans (strain ATCC 43123 / DSM 2839 / NBRC 102507 / CH34) (Ralstonia metallidurans) protein is Ribonuclease PH.